The primary structure comprises 419 residues: DNA-directed RNA polymerase I subunit RPA49 (419 aa).

2 positions are modified to phosphoserine: Ser35 and Ser163. Residue Lys373 is modified to N6-acetyllysine. Residues 397-419 (GTLSLPLPPAQTSDRLAKRRKIT) form a disordered region.

Belongs to the eukaryotic RPA49/POLR1E RNA polymerase subunit family. As to quaternary structure, component of the RNA polymerase I (Pol I) complex consisting of 13 subunits: a ten-subunit catalytic core composed of POLR1A/RPA1, POLR1B/RPA2, POLR1C/RPAC1, POLR1D/RPAC2, POLR1H/RPA12, POLR2E/RPABC1, POLR2F/RPABC2, POLR2H/RPABC3, POLR2K/RPABC4 and POLR2L/RPABC5; a mobile stalk subunit POLR1F/RPA43 protruding from the core and additional subunits homologous to general transcription factors POLR1E/RPA49 and POLR1G/RPA34. Forms a heterodimer with POLR1G/RPA34. Interacts with POLR1G. Also binds UBTF/UBF. Interacts with PWP1. Post-translationally, acetylated at Lys-373 by CREBBP/CBP, leading to decreased RNA polymerase I transcription. In normal conditions, deacetylated by SIRT7, promoting the association of RNA polymerase I with the rDNA promoter region and coding region. In response to stress, SIRT7 is released from nucleoli leading to hyperacetylation of POLR1E/PAF53 and decreased association of RNA polymerase I with the rDNA promoter region.

The protein resides in the nucleus. The protein localises to the nucleolus. Its function is as follows. Component of RNA polymerase I (Pol I), a DNA-dependent RNA polymerase which synthesizes ribosomal RNA precursors using the four ribonucleoside triphosphates as substrates. Appears to be involved in the formation of the initiation complex at the promoter by mediating the interaction between Pol I and UBTF/UBF. This Homo sapiens (Human) protein is DNA-directed RNA polymerase I subunit RPA49 (POLR1E).